The sequence spans 368 residues: Flagellar P-ring protein 1 (368 aa).

A signal peptide spans 1-24 (MIFKQIRRLIAAALLAALSLPAAA).

This sequence belongs to the FlgI family. The basal body constitutes a major portion of the flagellar organelle and consists of four rings (L,P,S, and M) mounted on a central rod.

The protein resides in the periplasm. Its subcellular location is the bacterial flagellum basal body. Functionally, assembles around the rod to form the L-ring and probably protects the motor/basal body from shearing forces during rotation. This chain is Flagellar P-ring protein 1, found in Chromobacterium violaceum (strain ATCC 12472 / DSM 30191 / JCM 1249 / CCUG 213 / NBRC 12614 / NCIMB 9131 / NCTC 9757 / MK).